A 319-amino-acid polypeptide reads, in one-letter code: Acetyl-coenzyme A carboxylase carboxyl transferase subunit alpha (319 aa).

The 262-residue stretch at 32 to 293 folds into the CoA carboxyltransferase C-terminal domain; that stretch reads NVETEVRALR…KAVLLNELDA (262 aa).

This sequence belongs to the AccA family. As to quaternary structure, acetyl-CoA carboxylase is a heterohexamer composed of biotin carboxyl carrier protein (AccB), biotin carboxylase (AccC) and two subunits each of ACCase subunit alpha (AccA) and ACCase subunit beta (AccD).

It localises to the cytoplasm. The catalysed reaction is N(6)-carboxybiotinyl-L-lysyl-[protein] + acetyl-CoA = N(6)-biotinyl-L-lysyl-[protein] + malonyl-CoA. It participates in lipid metabolism; malonyl-CoA biosynthesis; malonyl-CoA from acetyl-CoA: step 1/1. Functionally, component of the acetyl coenzyme A carboxylase (ACC) complex. First, biotin carboxylase catalyzes the carboxylation of biotin on its carrier protein (BCCP) and then the CO(2) group is transferred by the carboxyltransferase to acetyl-CoA to form malonyl-CoA. The chain is Acetyl-coenzyme A carboxylase carboxyl transferase subunit alpha from Xanthomonas oryzae pv. oryzae (strain MAFF 311018).